Consider the following 804-residue polypeptide: Phosphatidylinositol 4-kinase beta (804 aa).

The region spanning 55–245 is the PIK helical domain; that stretch reads LEKVKMIHGS…GTKLRKLILS (191 aa). 2 disordered regions span residues 69–122 and 251–309; these read LDKV…ARRR and AHKK…EPVR. Polar residues-rich tracts occupy residues 91 to 103 and 281 to 300; these read KLTN…TSSR and DATV…SNPK. Positions 523–789 constitute a PI3K/PI4K catalytic domain; sequence EPWEEKVRRI…MVDGSMRSIT (267 aa). Positions 529–535 are G-loop; it reads VRRIREG. Residues 656–664 are catalytic loop; sequence QVKDRHNGN. An activation loop region spans residues 675 to 699; that stretch reads HIDFGFILSSSPRNLGFETSAFKLT.

Belongs to the PI3/PI4-kinase family. Type III PI4K subfamily. Requires Mg(2+) as cofactor. It depends on Mn(2+) as a cofactor.

It is found in the endomembrane system. The protein localises to the mitochondrion outer membrane. It localises to the rough endoplasmic reticulum membrane. The enzyme catalyses a 1,2-diacyl-sn-glycero-3-phospho-(1D-myo-inositol) + ATP = a 1,2-diacyl-sn-glycero-3-phospho-(1D-myo-inositol 4-phosphate) + ADP + H(+). In terms of biological role, phosphorylates phosphatidylinositol (PI) in the first committed step in the production of the second messenger inositol-1,4,5,-trisphosphate (PIP). May play an important role in the inner ear development. This is Phosphatidylinositol 4-kinase beta (pi4kb) from Xenopus laevis (African clawed frog).